Here is a 439-residue protein sequence, read N- to C-terminus: MNAPHRDETTASHRDDGFFTESLESRDPEIFAASQKELGRQRDEIELIASENIVSAAVMEAQGGVMTNKYAEGYPGRRYYGGCQYVDIAEELAIDRAKQLFGCDFANVQPNSGSQANQGVFTALLQPGDTILGMSLDAGGHLTHGARPNQSGKWFNAVQYGVREGDLEIDYDQIAALAAEHKPKMIIAGGSAIPRIIDFARMREIADTIGAYLLVDMAHFAGMVASGHYPSPFPHAHVATTTTHKTLRGPRGGMIVTNDEAIAKKVNSAIFPGIQGGPLMHVIAGKAVAFGEALRPEFRDYQTQVIANAQALAAQLIKGGLDIVTGGTDTHLMLVDLRAKGVKGNATEKALGRAHITCNKNGIPFDTEKPMVTSGLRLGSPAGTTRGFGEAEFRQIADWIVEVVDGLAANGEDANDAVEAKVRGEVQALCDRFPIYPNL.

The tract at residues 1 to 20 (MNAPHRDETTASHRDDGFFT) is disordered. Residues Leu-136 and 140–142 (GHL) each bind (6S)-5,6,7,8-tetrahydrofolate. Lys-245 is subject to N6-(pyridoxal phosphate)lysine.

Belongs to the SHMT family. In terms of assembly, homodimer. Pyridoxal 5'-phosphate is required as a cofactor.

It is found in the cytoplasm. The enzyme catalyses (6R)-5,10-methylene-5,6,7,8-tetrahydrofolate + glycine + H2O = (6S)-5,6,7,8-tetrahydrofolate + L-serine. It functions in the pathway one-carbon metabolism; tetrahydrofolate interconversion. The protein operates within amino-acid biosynthesis; glycine biosynthesis; glycine from L-serine: step 1/1. Catalyzes the reversible interconversion of serine and glycine with tetrahydrofolate (THF) serving as the one-carbon carrier. This reaction serves as the major source of one-carbon groups required for the biosynthesis of purines, thymidylate, methionine, and other important biomolecules. Also exhibits THF-independent aldolase activity toward beta-hydroxyamino acids, producing glycine and aldehydes, via a retro-aldol mechanism. The polypeptide is Serine hydroxymethyltransferase (Jannaschia sp. (strain CCS1)).